The chain runs to 310 residues: Olfactory receptor 5H14 (310 aa).

Topologically, residues 1-28 (MEEENATLLTEFVLTGFLYQPQWKIPLF) are extracellular. The N-linked (GlcNAc...) asparagine glycan is linked to asparagine 5. The chain crosses the membrane as a helical span at residues 29–49 (LAFLVIYLITIMGNLGLIAVI). Residues 50–56 (WKDPHLH) are Cytoplasmic-facing. Residues 57-77 (IPMYLLLGNLAFVDALLSSSV) traverse the membrane as a helical segment. Topologically, residues 78 to 98 (TLKMLINFLAKSKMISLSECK) are extracellular. The cysteines at positions 97 and 179 are disulfide-linked. Residues 99–119 (IQLFSFAISVTTECFLLATMA) form a helical membrane-spanning segment. Over 120–143 (YDRYVAICKPLLYPAIMTNGLCIR) the chain is Cytoplasmic. The helical transmembrane segment at 144 to 164 (LLILSYVGGLLHALIHEGFLF) threads the bilayer. At 165–195 (RLTFCNSNIIQHFYCDIIPLLKISYTDSSIN) the chain is on the extracellular side. A helical membrane pass occupies residues 196 to 216 (FLMVFIFAGSIQVFTIGTVLI). At 217-240 (SYIFVLYTILKKKSVKGMRKAFST) the chain is on the cytoplasmic side. Residues 241-261 (CGAHLLSVSLYYGPLAFMYMG) form a helical membrane-spanning segment. Over 262–271 (SASPQADDQD) the chain is Extracellular. A helical membrane pass occupies residues 272–292 (MMESLFYTVIVPLLNPMIYSL). The Cytoplasmic portion of the chain corresponds to 293 to 310 (RNKQVIASFTKMFKRNDV).

The protein belongs to the G-protein coupled receptor 1 family.

Its subcellular location is the cell membrane. In terms of biological role, odorant receptor. This is Olfactory receptor 5H14 (OR5H14) from Homo sapiens (Human).